The sequence spans 230 residues: Demethylmenaquinone methyltransferase (230 aa).

S-adenosyl-L-methionine is bound by residues Thr-62, Asp-80, 100–101 (DG), and Ser-117.

This sequence belongs to the class I-like SAM-binding methyltransferase superfamily. MenG/UbiE family.

The enzyme catalyses a 2-demethylmenaquinol + S-adenosyl-L-methionine = a menaquinol + S-adenosyl-L-homocysteine + H(+). It functions in the pathway quinol/quinone metabolism; menaquinone biosynthesis; menaquinol from 1,4-dihydroxy-2-naphthoate: step 2/2. Its function is as follows. Methyltransferase required for the conversion of demethylmenaquinol (DMKH2) to menaquinol (MKH2). This Corynebacterium glutamicum (strain ATCC 13032 / DSM 20300 / JCM 1318 / BCRC 11384 / CCUG 27702 / LMG 3730 / NBRC 12168 / NCIMB 10025 / NRRL B-2784 / 534) protein is Demethylmenaquinone methyltransferase.